Reading from the N-terminus, the 421-residue chain is Protein FAM110C (421 aa).

3 disordered regions span residues 1-36 (MRAL…NKSA), 51-80 (TLGS…PSAL), and 141-266 (TTRV…PASM). Composition is skewed to basic and acidic residues over residues 143–155 (RVAD…KETE), 185–202 (PAEK…KETE), and 232–249 (PAEK…KETE). A Phosphoserine modification is found at Ser-350.

Belongs to the FAM110 family. In terms of assembly, interacts with AKT1; the interaction is transient and follows AKT1 activation. Interacts with PPP2CA and alpha-tubulin.

It is found in the cytoplasm. The protein localises to the cytoskeleton. It localises to the microtubule organizing center. The protein resides in the centrosome. Its subcellular location is the spindle pole. It is found in the nucleus. Its function is as follows. May play a role in microtubule organization. May play a role in cell spreading and cell migration of epithelial cells; the function may involve the AKT1 signaling pathway. The polypeptide is Protein FAM110C (Fam110c) (Mus musculus (Mouse)).